The following is a 155-amino-acid chain: S-ribosylhomocysteine lyase (155 aa).

The Fe cation site is built by histidine 57, histidine 61, and cysteine 124.

Belongs to the LuxS family. As to quaternary structure, homodimer. It depends on Fe cation as a cofactor.

It catalyses the reaction S-(5-deoxy-D-ribos-5-yl)-L-homocysteine = (S)-4,5-dihydroxypentane-2,3-dione + L-homocysteine. Its function is as follows. Involved in the synthesis of autoinducer 2 (AI-2) which is secreted by bacteria and is used to communicate both the cell density and the metabolic potential of the environment. The regulation of gene expression in response to changes in cell density is called quorum sensing. Catalyzes the transformation of S-ribosylhomocysteine (RHC) to homocysteine (HC) and 4,5-dihydroxy-2,3-pentadione (DPD). This chain is S-ribosylhomocysteine lyase, found in Listeria monocytogenes serotype 4a (strain HCC23).